The chain runs to 394 residues: Envelope glycoprotein D (394 aa).

The N-terminal stretch at 1–25 (MGGAAARLGAVILFVVIVGLHGVRG) is a signal peptide. The tract at residues 25–57 (GKYALADASLKMADPNRFRGKDLPVPDRLTDPP) is interaction with TNFRSF14. Residues 26-339 (KYALADASLK…PYHPPATPNN (314 aa)) are Virion surface-facing. Histidine 64 is a Zn(2+) binding site. Disulfide bonds link cysteine 91–cysteine 214, cysteine 131–cysteine 227, and cysteine 143–cysteine 152. N-linked (GlcNAc...) asparagine; by host glycosylation is found at asparagine 119 and asparagine 146. A Zn(2+)-binding site is contributed by aspartate 240. The tract at residues 261-305 (LKIAGWHGPKAPYTSTLLPPELSETPNATQPELAPEDPEDSALLE) is profusion. A disordered region spans residues 275-301 (STLLPPELSETPNATQPELAPEDPEDS). Residue asparagine 287 is glycosylated (N-linked (GlcNAc...) asparagine; by host). Residues 340–364 (MGLIAGAVGGSLLAALVICGIVYWM) form a helical membrane-spanning segment. Residues 365-394 (RRRTQKGPKRIRLPHIREDDQPSSHQPLFY) are Intravirion-facing. The tract at residues 374–394 (RIRLPHIREDDQPSSHQPLFY) is disordered.

This sequence belongs to the herpesviridae glycoprotein D family. As to quaternary structure, homodimer. Interacts with host receptor TNFRSF14. Interacts with host receptor NECTIN1. Interacts (via profusion domain) with gB; this interaction occurs in the absence of gH/gL. Interacts (via profusion domain) with gH/gL heterodimer; this interaction occurs in the absence of gB. Associates with the gB-gH/gL-gD complex. Interacts (via C-terminus) with UL11 tegument protein. Interacts with host RSAD2.

Its subcellular location is the virion membrane. The protein localises to the host Golgi apparatus. Functionally, envelope glycoprotein that binds to the host cell entry receptors NECTIN1, TNFRSF14/HVEM and 3-O-sulfated heparan sulfate, promoting the virus entry into host cells. May trigger fusion with host membrane, by recruiting the fusion machinery composed of gB and gH/gL. The polypeptide is Envelope glycoprotein D (gD) (Homo sapiens (Human)).